The primary structure comprises 380 residues: Lipid-A-disaccharide synthase (380 aa).

This sequence belongs to the LpxB family.

The enzyme catalyses a lipid X + a UDP-2-N,3-O-bis[(3R)-3-hydroxyacyl]-alpha-D-glucosamine = a lipid A disaccharide + UDP + H(+). The protein operates within bacterial outer membrane biogenesis; LPS lipid A biosynthesis. Its function is as follows. Condensation of UDP-2,3-diacylglucosamine and 2,3-diacylglucosamine-1-phosphate to form lipid A disaccharide, a precursor of lipid A, a phosphorylated glycolipid that anchors the lipopolysaccharide to the outer membrane of the cell. This Photobacterium profundum (strain SS9) protein is Lipid-A-disaccharide synthase.